Reading from the N-terminus, the 378-residue chain is SWI/SNF-related matrix-associated actin-dependent regulator of chromatin subfamily B member 1 (378 aa).

Positions 1–106 (MIMALSKTFG…DEKYKAVSIS (106 aa)) are DNA-binding.

Belongs to the SNF5 family. Component of the multiprotein chromatin-remodeling complexes SWI/SNF. Component of neural progenitors-specific chromatin remodeling complex (npBAF complex) and the neuron-specific chromatin remodeling complex (nBAF complex). Component of the BAF (SWI/SNF) chromatin remodeling complex. Component of the SWI/SNF-B (PBAF) chromatin remodeling complex. Binds to double-stranded DNA.

The protein resides in the nucleus. Functionally, involved in chromatin-remodeling. Core component of the BAF (SWI/SNF) complex. This ATP-dependent chromatin-remodeling complex plays important roles in cell proliferation and differentiation, in cellular antiviral activities and inhibition of tumor formation. Belongs to the neural progenitors-specific chromatin remodeling complex (npBAF complex) and the neuron-specific chromatin remodeling complex (nBAF complex) and may play a role in neural development. In Xenopus tropicalis (Western clawed frog), this protein is SWI/SNF-related matrix-associated actin-dependent regulator of chromatin subfamily B member 1 (smarcb1).